Here is a 388-residue protein sequence, read N- to C-terminus: Succinate--CoA ligase [ADP-forming] subunit beta (388 aa).

The 236-residue stretch at 9–244 folds into the ATP-grasp domain; that stretch reads KEILRKFGVA…LDEEDPAEIE (236 aa). ATP contacts are provided by residues Lys-46, 53 to 55, Glu-99, Ala-102, and Glu-107; that span reads GRG. 2 residues coordinate Mg(2+): Asn-199 and Asp-213. Residues Asn-264 and 321–323 each bind substrate; that span reads GIM.

The protein belongs to the succinate/malate CoA ligase beta subunit family. Heterotetramer of two alpha and two beta subunits. Requires Mg(2+) as cofactor.

The catalysed reaction is succinate + ATP + CoA = succinyl-CoA + ADP + phosphate. The enzyme catalyses GTP + succinate + CoA = succinyl-CoA + GDP + phosphate. It functions in the pathway carbohydrate metabolism; tricarboxylic acid cycle; succinate from succinyl-CoA (ligase route): step 1/1. Its function is as follows. Succinyl-CoA synthetase functions in the citric acid cycle (TCA), coupling the hydrolysis of succinyl-CoA to the synthesis of either ATP or GTP and thus represents the only step of substrate-level phosphorylation in the TCA. The beta subunit provides nucleotide specificity of the enzyme and binds the substrate succinate, while the binding sites for coenzyme A and phosphate are found in the alpha subunit. This chain is Succinate--CoA ligase [ADP-forming] subunit beta, found in Burkholderia ambifaria (strain MC40-6).